The chain runs to 254 residues: Proteasome activator complex subunit 3 (254 aa).

Residue Ala-2 is modified to N-acetylalanine. Ser-17 and Ser-24 each carry phosphoserine. The residue at position 195 (Lys-195) is an N6-acetyllysine; by P300/CBP. Ser-247 carries the post-translational modification Phosphoserine; by CHEK2.

Belongs to the PA28 family. As to quaternary structure, homoheptamer; the stability of the heptamer is essential for the specific activation of the trypsine-like subunit and inhibition of the chymotrypsin-like and postglutamyl-preferring (PGPH) subunits of the proteasome. Interacts with p53/TP53 and MDM2. Interacts with MAP3K3. Associates with the proteasome. Interacts with CCAR2. Interacts with PSME3IP1 (via C-terminus); the interaction is direct and promotes the association of PSME3 with the 20S proteasome. Interacts with COIL; the interaction is inhibited by PSME3IP1. In terms of assembly, (Microbial infection) Interacts with human cytomegalovirus UL27. In terms of processing, phosphorylated by MAP3K3. Phosphorylation at Ser-247 promotes its association with CCAR2. Post-translationally, acetylation at the major site Lys-195 is important for oligomerization and ability to degrade its target substrates. Deacetylated by SIRT1.

The protein localises to the nucleus. The protein resides in the cytoplasm. Functionally, subunit of the 11S REG-gamma (also called PA28-gamma) proteasome regulator, a doughnut-shaped homoheptamer which associates with the proteasome. 11S REG-gamma activates the trypsin-like catalytic subunit of the proteasome but inhibits the chymotrypsin-like and postglutamyl-preferring (PGPH) subunits. Facilitates the MDM2-p53/TP53 interaction which promotes ubiquitination- and MDM2-dependent proteasomal degradation of p53/TP53, limiting its accumulation and resulting in inhibited apoptosis after DNA damage. May also be involved in cell cycle regulation. Mediates CCAR2 and CHEK2-dependent SIRT1 inhibition. The polypeptide is Proteasome activator complex subunit 3 (PSME3) (Homo sapiens (Human)).